The following is a 172-amino-acid chain: 3-hydroxydecanoyl-[acyl-carrier-protein] dehydratase (172 aa).

Residue histidine 71 is part of the active site.

This sequence belongs to the thioester dehydratase family. FabA subfamily. As to quaternary structure, homodimer.

The protein localises to the cytoplasm. The catalysed reaction is a (3R)-hydroxyacyl-[ACP] = a (2E)-enoyl-[ACP] + H2O. It catalyses the reaction (3R)-hydroxydecanoyl-[ACP] = (2E)-decenoyl-[ACP] + H2O. It carries out the reaction (2E)-decenoyl-[ACP] = (3Z)-decenoyl-[ACP]. It functions in the pathway lipid metabolism; fatty acid biosynthesis. Necessary for the introduction of cis unsaturation into fatty acids. Catalyzes the dehydration of (3R)-3-hydroxydecanoyl-ACP to E-(2)-decenoyl-ACP and then its isomerization to Z-(3)-decenoyl-ACP. Can catalyze the dehydratase reaction for beta-hydroxyacyl-ACPs with saturated chain lengths up to 16:0, being most active on intermediate chain length. The sequence is that of 3-hydroxydecanoyl-[acyl-carrier-protein] dehydratase from Brucella anthropi (strain ATCC 49188 / DSM 6882 / CCUG 24695 / JCM 21032 / LMG 3331 / NBRC 15819 / NCTC 12168 / Alc 37) (Ochrobactrum anthropi).